Consider the following 557-residue polypeptide: Glucose-6-phosphate isomerase (557 aa).

Glutamate 361 functions as the Proton donor in the catalytic mechanism. Residues histidine 392 and lysine 520 contribute to the active site.

This sequence belongs to the GPI family.

It localises to the cytoplasm. The enzyme catalyses alpha-D-glucose 6-phosphate = beta-D-fructose 6-phosphate. Its pathway is carbohydrate biosynthesis; gluconeogenesis. It functions in the pathway carbohydrate degradation; glycolysis; D-glyceraldehyde 3-phosphate and glycerone phosphate from D-glucose: step 2/4. In terms of biological role, catalyzes the reversible isomerization of glucose-6-phosphate to fructose-6-phosphate. This Acinetobacter venetianus (strain ATCC 31012 / DSM 23050 / BCRC 14357 / CCUG 45561 / CIP 110063 / KCTC 2702 / LMG 19082 / RAG-1) protein is Glucose-6-phosphate isomerase.